Here is a 156-residue protein sequence, read N- to C-terminus: SsrA-binding protein (156 aa).

This sequence belongs to the SmpB family.

It localises to the cytoplasm. Functionally, required for rescue of stalled ribosomes mediated by trans-translation. Binds to transfer-messenger RNA (tmRNA), required for stable association of tmRNA with ribosomes. tmRNA and SmpB together mimic tRNA shape, replacing the anticodon stem-loop with SmpB. tmRNA is encoded by the ssrA gene; the 2 termini fold to resemble tRNA(Ala) and it encodes a 'tag peptide', a short internal open reading frame. During trans-translation Ala-aminoacylated tmRNA acts like a tRNA, entering the A-site of stalled ribosomes, displacing the stalled mRNA. The ribosome then switches to translate the ORF on the tmRNA; the nascent peptide is terminated with the 'tag peptide' encoded by the tmRNA and targeted for degradation. The ribosome is freed to recommence translation, which seems to be the essential function of trans-translation. In Trichodesmium erythraeum (strain IMS101), this protein is SsrA-binding protein.